A 297-amino-acid chain; its full sequence is Acetylglutamate kinase (297 aa).

Residues 72–73 (GG), Arg-94, and Asn-187 contribute to the substrate site.

Belongs to the acetylglutamate kinase family. ArgB subfamily.

It is found in the cytoplasm. It carries out the reaction N-acetyl-L-glutamate + ATP = N-acetyl-L-glutamyl 5-phosphate + ADP. It functions in the pathway amino-acid biosynthesis; L-arginine biosynthesis; N(2)-acetyl-L-ornithine from L-glutamate: step 2/4. Its function is as follows. Catalyzes the ATP-dependent phosphorylation of N-acetyl-L-glutamate. The protein is Acetylglutamate kinase of Synechocystis sp. (strain ATCC 27184 / PCC 6803 / Kazusa).